The following is a 115-amino-acid chain: Procyclic form-specific polypeptide (115 aa).

The signal sequence occupies residues 1–27 (MAPRSLYLLAVLLFSANLFAGVGFAAA). Residues 27 to 97 (AAEGPEDKGL…PEPEPGAATL (71 aa)) are disordered. Positions 31–52 (PEDKGLTKGGKGKGEKGTKVGA) are enriched in basic and acidic residues. The N-linked (GlcNAc...) asparagine glycan is linked to Asn56. Tandem repeats lie at residues 59–60 (DP), 61–62 (DP), 63–64 (EP), 65–66 (EP), 67–68 (EP), 69–70 (EP), 71–72 (EP), 73–74 (EP), 75–76 (EP), 77–78 (EP), 79–80 (EP), 81–82 (EP), 83–84 (EP), 85–86 (EP), 87–88 (EP), 89–90 (EP), and 91–92 (EP). A 17 X 2 AA tandem repeats of [DE]-P region spans residues 59 to 92 (DPDPEPEPEPEPEPEPEPEPEPEPEPEPEPEPEP). Residues 60 to 90 (PDPEPEPEPEPEPEPEPEPEPEPEPEPEPEP) show a composition bias toward acidic residues. Residue Gly93 is the site of GPI-anchor amidated glycine attachment. A propeptide spans 94-115 (AATLKSVALPFAIAAAALVAAF) (removed in mature form).

It is found in the cell membrane. Major surface antigen of procyclic forms. In Trypanosoma brucei brucei, this protein is Procyclic form-specific polypeptide (PROA).